The following is a 427-amino-acid chain: Putative transporter YdfJ (427 aa).

Over 1–7 the chain is Cytoplasmic; sequence MDFQLYS. 2 helical membrane passes run 8–28 and 29–49; these read LGAA…AMAL and ILAM…AFIF. The Cytoplasmic segment spans residues 50–74; it reads GKMGDRIGRKKVLFITITMMGICTT. The chain crosses the membrane as a helical span at residues 75–95; sequence LIGVLPTYAQIGVFAPILLVT. The Periplasmic portion of the chain corresponds to 96–97; that stretch reads LR. Residues 98-118 traverse the membrane as a helical segment; the sequence is IIQGLGAGAEISGAGTMLAEY. At 119 to 132 the chain is on the cytoplasmic side; that stretch reads APKGKRGIISSFVA. A helical membrane pass occupies residues 133–153; the sequence is MGTNCGTLSATAIWAFMFFIL. The Periplasmic portion of the chain corresponds to 154-157; it reads SKEE. A helical transmembrane segment spans residues 158-178; that stretch reads LLAWGWRIPFLASVVVMVFAI. The Cytoplasmic portion of the chain corresponds to 179 to 225; it reads WLRMNLKESPVFEKVNDSNQPTAKPAPAGSMFQSKSFWLATGLRFGQ. Residues 226 to 246 traverse the membrane as a helical segment; it reads AGNSGLIQTFLAGYLVQTLLF. Residues 247–251 lie on the Periplasmic side of the membrane; the sequence is NKAIP. The helical transmembrane segment at 252–272 threads the bilayer; sequence TDALMISSILGFMTIPFLGWL. The Cytoplasmic segment spans residues 273–279; the sequence is SDKIGRR. A helical membrane pass occupies residues 280–300; that stretch reads IPYIIMNTSAIVLAWPMLSII. Residues 301–307 are Periplasmic-facing; the sequence is VDKSYAP. A helical transmembrane segment spans residues 308–328; it reads STIMVALIVIHNCAVLGLFAL. Residues 329 to 351 are Cytoplasmic-facing; that stretch reads ENITMAEMFGCKNRFTRMAISKE. Residues 352 to 372 traverse the membrane as a helical segment; the sequence is IGGLIASGFGPILAGIFCTMT. A topological domain (periplasmic) is located at residue Glu-373. The helical transmembrane segment at 374 to 394 threads the bilayer; the sequence is SWYPIAIMIMAYSVIGLISAL. Topologically, residues 395 to 427 are cytoplasmic; that stretch reads KMPEVKDRDLSALEDAAEDQPRVVRAAQPSRSL.

This sequence belongs to the major facilitator superfamily. Metabolite:H+ Symporter (MHS) family (TC 2.A.1.6) family.

It is found in the cell inner membrane. When overexpressed in human HEK-293 cells forms an inward rectifying potassium channel. In Escherichia coli (strain K12), this protein is Putative transporter YdfJ (ydfJ).